A 234-amino-acid polypeptide reads, in one-letter code: MVELRVNAGNVKNPNVHKIGIIALGSHLENHGPALPIDTDAKIASHIAFQASLESGAKFLGVIYPAHELKEINHGIHVSLEDLTDEIVKVLKSAKKFLRISSVIIVNGHGGNLPIVTTLYDIEERTGLLITLNSKIIESEGPHGGSGELSMAKALGIIDESQVENQTNLEEYGEVGLYMFGEARRNDPNIEEGALDVEENGVYVDDVYGQELLKLAINSVLLDVEKQLDSHYGY.

Glutamate 29, histidine 31, aspartate 40, and histidine 109 together coordinate Fe cation.

It belongs to the creatininase superfamily. FAPy deformylase family. Homodimer. Fe(2+) is required as a cofactor. Requires Zn(2+) as cofactor.

It catalyses the reaction 2-amino-5-formylamino-6-(5-phospho-D-ribosylamino)pyrimidin-4(3H)-one + H2O = 2,5-diamino-6-(1-D-ribosylamino)pyrimidin-4(3H)-one 5'-phosphate + formate + H(+). It functions in the pathway cofactor biosynthesis; coenzyme F420 biosynthesis. It participates in cofactor biosynthesis; riboflavin biosynthesis. Its function is as follows. Catalyzes the hydrolysis of the formamide of 2-amino-5-formylamino-6-ribosylamino-4(3H)-pyrimidinone 5'-monophosphate (FAPy) to form 2,5-diamino-6-ribosylamino-4(3H)-pyrimidinone 5'-phosphate (APy). The protein is 2-amino-5-formylamino-6-ribosylaminopyrimidin-4(3H)-one 5'-monophosphate deformylase of Methanobrevibacter ruminantium (strain ATCC 35063 / DSM 1093 / JCM 13430 / OCM 146 / M1) (Methanobacterium ruminantium).